Here is a 369-residue protein sequence, read N- to C-terminus: Sesquiterpene cyclase hepA (369 aa).

Mg(2+) contacts are provided by Asp-100, Asn-248, Ser-252, and Asp-256. A DDXXD motif motif is present at residues 100 to 104; sequence DDEID. A (N,D)D(L,I,V)X(S,T)XXXE motif motif is present at residues 255–262; that stretch reads NDLLSLRK.

The protein belongs to the terpene synthase family. The cofactor is Mg(2+).

In terms of biological role, sesquiterpene cyclase; part of the gene cluster that mediates the biosynthesis of heptelidic acid (HA), a sesquiterpene lactone that acts as an inhibitor of glyceraldehyde-3-phosphatedehydrogenase (GAPDH) and a growth inhibitor of the salt-tolerant lactic acid bacteria in soy sauce brewing. This chain is Sesquiterpene cyclase hepA, found in Aspergillus oryzae (strain ATCC 42149 / RIB 40) (Yellow koji mold).